A 411-amino-acid polypeptide reads, in one-letter code: G1/S-specific cyclin pas1 (411 aa).

2 disordered regions span residues 210 to 253 (LKNQ…PSVL) and 307 to 326 (SLSK…VGVY). A compositionally biased stretch (low complexity) spans 218–252 (PSSSPQTTQDSSPILTMAPSTPVSVGSTPPSTPSV).

The protein belongs to the cyclin family.

Its function is as follows. Essential for the control of the cell cycle at the G1/S (start) transition. Interacts with the pef1 protein kinase. The pef1/pas1 complex activates the res2/cdc10 complex. In Schizosaccharomyces pombe (strain 972 / ATCC 24843) (Fission yeast), this protein is G1/S-specific cyclin pas1 (pas1).